Reading from the N-terminus, the 343-residue chain is DNA-directed RNA polymerase subunit alpha (343 aa).

Residues 1-239 (MGETVTIQKN…DQLNVFVNFE (239 aa)) are alpha N-terminal domain (alpha-NTD). The segment at 255–343 (FNPAFLKKVD…ELAKRFEDHY (89 aa)) is alpha C-terminal domain (alpha-CTD).

This sequence belongs to the RNA polymerase alpha chain family. In terms of assembly, homodimer. The RNAP catalytic core consists of 2 alpha, 1 beta, 1 beta' and 1 omega subunit. When a sigma factor is associated with the core the holoenzyme is formed, which can initiate transcription.

The catalysed reaction is RNA(n) + a ribonucleoside 5'-triphosphate = RNA(n+1) + diphosphate. Its function is as follows. DNA-dependent RNA polymerase catalyzes the transcription of DNA into RNA using the four ribonucleoside triphosphates as substrates. The protein is DNA-directed RNA polymerase subunit alpha of Bradyrhizobium sp. (strain BTAi1 / ATCC BAA-1182).